A 148-amino-acid polypeptide reads, in one-letter code: Short form salivary protein D7S1 (148 aa).

The N-terminal stretch at Met-1–Ala-21 is a signal peptide. 3 disulfides stabilise this stretch: Cys-28–Cys-61, Cys-41–Cys-147, and Cys-103–Cys-119.

This sequence belongs to the PBP/GOBP family. In terms of tissue distribution, female salivary gland.

The protein resides in the secreted. Functionally, in contrast to the related D7 salivary proteins that can bind biogenic amines, does not bind serotonin. In Aedes aegypti (Yellowfever mosquito), this protein is Short form salivary protein D7S1.